The primary structure comprises 579 residues: Rop guanine nucleotide exchange factor 6 (579 aa).

Low complexity predominate over residues 31–61; the sequence is ESTTDSSLSSSSSGVGSSSGRSSVAERSVSS. The tract at residues 31 to 89 is disordered; that stretch reads ESTTDSSLSSSSSGVGSSSGRSSVAERSVSSPPTKSQILGWPLGQGSWRKSSGKMKKKT. The PRONE domain occupies 98–479; that stretch reads FKRVGTETSE…DISKDDGDGD (382 aa).

In terms of biological role, guanine-nucleotide exchange factor (GEF) that acts as an activator of Rop (Rho of plants) GTPases by promoting the exchange of GDP for GTP. This Arabidopsis thaliana (Mouse-ear cress) protein is Rop guanine nucleotide exchange factor 6 (ROPGEF6).